The sequence spans 315 residues: uncharacterized protein (315 aa).

3 consecutive transmembrane segments (helical) span residues 19–39, 56–76, and 81–101; these read IGAGAATIASAGAAIGIGNVF, TVLVVTLTLLGGVAAFYLHSF, and PLKKIIYLFLVFFIAVGISLI. The span at 154–171 shows a compositional bias: polar residues; it reads EDSASSGRTSSSVNQPIQ. Residues 154 to 214 form a disordered region; the sequence is EDSASSGRTS…EREARAQEHD (61 aa). Residues 203-214 are compositionally biased toward basic and acidic residues; the sequence is GGEREARAQEHD.

The protein belongs to the ATPase C chain family.

The protein localises to the mitochondrion membrane. This is an uncharacterized protein from Arabidopsis thaliana (Mouse-ear cress).